The sequence spans 231 residues: Probable tetraspanin tspE (231 aa).

The Cytoplasmic portion of the chain corresponds to 1–21 (MTFVDNFEFNQNTPRLVRGPF). Residues 22 to 42 (IILNSIIFSLSFILLCSTGII) traverse the membrane as a helical segment. Over 43-58 (IYYLNEYYLVKDLTIP) the chain is Extracellular. The chain crosses the membrane as a helical span at residues 59–79 (LGSFILSAYMVITTIVGGIAI). The Cytoplasmic portion of the chain corresponds to 80–83 (WKKK). A helical transmembrane segment spans residues 84-104 (LGLHLTFMVFLVVLIVCLVGV). Residues 105–195 (SAKMIVDSGN…VESILKYLGY (91 aa)) lie on the Extracellular side of the membrane. A helical membrane pass occupies residues 196 to 216 (YGIVLSVIELILLILSGFFLL). Topologically, residues 217–231 (KTNKNVKSKSFILQD) are cytoplasmic.

The protein belongs to the tetraspanin (TM4SF) family.

Its subcellular location is the membrane. The chain is Probable tetraspanin tspE (tspE) from Dictyostelium discoideum (Social amoeba).